We begin with the raw amino-acid sequence, 86 residues long: Electron transfer flavoprotein regulatory factor 1 (86 aa).

This sequence belongs to the complex I LYR family.

It localises to the mitochondrion. In terms of biological role, acts as a regulator of the electron transfer flavoprotein by promoting the removal of flavin from the ETF holoenzyme (composed of ETFA and ETFB). In Taeniopygia guttata (Zebra finch), this protein is Electron transfer flavoprotein regulatory factor 1.